We begin with the raw amino-acid sequence, 191 residues long: Inosine triphosphate pyrophosphatase (191 aa).

Position 12 to 17 (12 to 17 (TGNANK)) interacts with ITP. Glu42 provides a ligand contact to Mg(2+). ITP-binding positions include Lys54, 70 to 71 (DT), Lys87, 145 to 148 (FGWD), Lys168, and 173 to 174 (HR).

This sequence belongs to the HAM1 NTPase family. Homodimer. Mg(2+) serves as cofactor. It depends on Mn(2+) as a cofactor.

Its subcellular location is the cytoplasm. The enzyme catalyses ITP + H2O = IMP + diphosphate + H(+). The catalysed reaction is dITP + H2O = dIMP + diphosphate + H(+). It catalyses the reaction XTP + H2O = XMP + diphosphate + H(+). Its function is as follows. Pyrophosphatase that hydrolyzes non-canonical purine nucleotides such as inosine triphosphate (ITP), deoxyinosine triphosphate (dITP) or xanthosine 5'-triphosphate (XTP) to their respective monophosphate derivatives. The enzyme does not distinguish between the deoxy- and ribose forms. Probably excludes non-canonical purines from RNA and DNA precursor pools, thus preventing their incorporation into RNA and DNA and avoiding chromosomal lesions. This Phytophthora infestans (strain T30-4) (Potato late blight agent) protein is Inosine triphosphate pyrophosphatase.